We begin with the raw amino-acid sequence, 132 residues long: Small ribosomal subunit protein uS8 (132 aa).

The protein belongs to the universal ribosomal protein uS8 family. Part of the 30S ribosomal subunit. Contacts proteins S5 and S12.

Functionally, one of the primary rRNA binding proteins, it binds directly to 16S rRNA central domain where it helps coordinate assembly of the platform of the 30S subunit. This is Small ribosomal subunit protein uS8 from Clostridium botulinum (strain Alaska E43 / Type E3).